Consider the following 146-residue polypeptide: Dihydroneopterin aldolase 1 (146 aa).

Substrate contacts are provided by residues glutamate 41, tyrosine 73, and leucine 92–glutamate 93. Residue lysine 119 is the Proton donor/acceptor of the active site.

Belongs to the DHNA family. Homooctamer. Forms a hollow cylinder assembled from two ring-shaped tetramers. As to expression, expressed in roots, leaves, stems and siliques.

The enzyme catalyses 7,8-dihydroneopterin = 6-hydroxymethyl-7,8-dihydropterin + glycolaldehyde. It participates in cofactor biosynthesis; tetrahydrofolate biosynthesis; 2-amino-4-hydroxy-6-hydroxymethyl-7,8-dihydropteridine diphosphate from 7,8-dihydroneopterin triphosphate: step 3/4. Its function is as follows. Catalyzes the conversion of 7,8-dihydroneopterin into 6-hydroxymethyl-7,8-dihydropterin, a biosynthetic precursor of the vitamin tetrahydrofolate. Can use L-threo-dihydroneopterin and D-erythro-dihydroneopterin as substrates for the formation of 6-hydroxymethyldihydropterin, but it can also catalyze the epimerization of carbon 2' of dihydroneopterin and dihydromonapterin. This chain is Dihydroneopterin aldolase 1, found in Arabidopsis thaliana (Mouse-ear cress).